We begin with the raw amino-acid sequence, 1055 residues long: MKSASSEQSVERIENGHKKKRNRPQKQNRRSKQSSVPIEDAHVEESLDGRDSSRSKAKDSTSSSKQQRPNTDELEAMRASNVAFNSMPPMRAESGYPRRSASPLLSSPEVSKQLLSKSCPDPRACEQSPGMNGELFQQIEGSSQRKIFSSHWSLDAVTEALEKGEAFKALFRVNAHNRNEAYCKIDGVPTDILINGNVCQSRAVEGDTVVIKLDPLSLWPKMKGFVTESAAKPEGTNSPPEKDDKKARQKNGIDVVEGFEDGFSKNKSSVIGKGAKNGVTPSSPPSLDSCLGSFCEQKGNCSAVDKLCGILSSFPHKRPTGQVVAVVEKSLVRDSIVGLLDVKGWIHYKESDPKRCKSPLSLSDDEYVQLMPADPRFPKLIVPFHVLPGSIRARLENLDPNLEAELVAAQIVDWGEGSPFPVAQITHLFGRGSELEPQINAILYQNSVCDSDFSPGSLTSLPRVPWEVPEEEVQRRKDLRDLCVLTIDPSTATDLDDALSVQSLPGGFFRVGVHIADVSYFVLPETALDTEARFRSTSVYLMQRKISMLPPLLSENVGSLSPGADRLAFSILWDLNREGDVIDRWIGRTIIRSCCKLSYDHAQDIIDGKSDVAENGWPALHGSFKWCDVTRSVKQLSEISTTLRQKRFRNGALQLENSKPVFLFDEHGVPYDFVTCSRKGSNFLVEEFMLLANMTAAEVISQAYPASSLLRRHPEPNTRKLKEFEGFCSKHGMDLDISSSGQLQDSLEKITGNLKDDSVFVDILNNYAIKPMQLASYFCTGNLKDSVAEWGHYALAVPLYTHFTSPLRRYPDIVVHRALAAALEAEELYSKQKQTAIDEGRSCFTGIHFNKDAAESIEGKEALSVAALKHGVPSTEILSDVAAYCNERKLAARKVRDACDKLYTWFVLKQKEIFPCEARVMNLGSRFMTVYISKLGIERRIYYDQIEGLCADWLEATSTLIVDKLYSKRGGRGFFKPMKEAVYLVSPCEVCVAKCSALSVHDTESPEAVSIDEVAPAVFPLTIQLFSTIPVVLHAVGGDDGPLDIGARLYMSSYY.

Disordered regions lie at residues 1–109 (MKSA…SSPE) and 229–249 (SAAK…KARQ). The span at 17–32 (HKKKRNRPQKQNRRSK) shows a compositional bias: basic residues. The segment covering 39-59 (EDAHVEESLDGRDSSRSKAKD) has biased composition (basic and acidic residues). Residues 97-108 (PRRSASPLLSSP) are compositionally biased toward low complexity. Mg(2+) contacts are provided by Asp-488 and Asp-497.

It belongs to the RNR ribonuclease family. DIS3L2 subfamily. It depends on Mg(2+) as a cofactor. Mn(2+) is required as a cofactor. In terms of tissue distribution, widely expressed.

It is found in the cytoplasm. It localises to the P-body. In terms of biological role, 3'-5'-exoribonuclease that specifically recognizes RNAs polyuridylated at their 3' end and mediates their degradation. Component of an exosome-independent RNA degradation pathway that mediates degradation of cytoplasmic mRNAs that have been deadenylated and subsequently uridylated at their 3'. This chain is DIS3-like exonuclease 2 (SOV), found in Arabidopsis thaliana (Mouse-ear cress).